The sequence spans 1409 residues: Mediator of RNA polymerase II transcription subunit 23 (1409 aa).

A disordered region spans residues 1359–1409 (ASAAGQGPAQGGPQSQQPQTTGQAGGQPSVPQQQQQTQQQQPQQQQQVQQQ).

It belongs to the Mediator complex subunit 23 family. As to quaternary structure, component of the Mediator complex.

It is found in the nucleus. Component of the Mediator complex, a coactivator involved in the regulated transcription of nearly all RNA polymerase II-dependent genes. Mediator functions as a bridge to convey information from gene-specific regulatory proteins to the basal RNA polymerase II transcription machinery. Mediator is recruited to promoters by direct interactions with regulatory proteins and serves as a scaffold for the assembly of a functional preinitiation complex with RNA polymerase II and the general transcription factors. This Aedes aegypti (Yellowfever mosquito) protein is Mediator of RNA polymerase II transcription subunit 23 (MED23).